The following is a 262-amino-acid chain: Acyl-[acyl-carrier-protein]--UDP-N-acetylglucosamine O-acyltransferase (262 aa).

Belongs to the transferase hexapeptide repeat family. LpxA subfamily. As to quaternary structure, homotrimer.

Its subcellular location is the cytoplasm. The enzyme catalyses a (3R)-hydroxyacyl-[ACP] + UDP-N-acetyl-alpha-D-glucosamine = a UDP-3-O-[(3R)-3-hydroxyacyl]-N-acetyl-alpha-D-glucosamine + holo-[ACP]. Its pathway is glycolipid biosynthesis; lipid IV(A) biosynthesis; lipid IV(A) from (3R)-3-hydroxytetradecanoyl-[acyl-carrier-protein] and UDP-N-acetyl-alpha-D-glucosamine: step 1/6. In terms of biological role, involved in the biosynthesis of lipid A, a phosphorylated glycolipid that anchors the lipopolysaccharide to the outer membrane of the cell. The chain is Acyl-[acyl-carrier-protein]--UDP-N-acetylglucosamine O-acyltransferase from Blochmanniella floridana.